The following is a 189-amino-acid chain: CASP-like protein 1F2 (189 aa).

Over 1–27 the chain is Cytoplasmic; that stretch reads MESLEVANGKSSALGVSREASSPPQMG. Residues 28 to 48 traverse the membrane as a helical segment; it reads FFIAQVVLRFFTLAFTGAAIA. Topologically, residues 49–77 are extracellular; it reads VMVTAKETVEVFSISFTVRYSYLSAFKFL. A helical membrane pass occupies residues 78–98; sequence VGADAVVCGFSMLSLIFVSIF. The Cytoplasmic portion of the chain corresponds to 99-113; sequence NKGKSNHYFFLYFHD. The helical transmembrane segment at 114-134 threads the bilayer; the sequence is LILMVLSMSACAAATAVGYVG. Residues 135–156 lie on the Extracellular side of the membrane; it reads RYGQDKAAWMAVCGNVKMFCDK. A helical transmembrane segment spans residues 157 to 177; it reads ALASILLSLIGFICLFLLTIM. The Cytoplasmic segment spans residues 178-189; sequence AARNLRVSGHLI.

Belongs to the Casparian strip membrane proteins (CASP) family. As to quaternary structure, homodimer and heterodimers.

The protein localises to the cell membrane. The chain is CASP-like protein 1F2 from Vitis vinifera (Grape).